A 977-amino-acid chain; its full sequence is Poly [ADP-ribose] polymerase 1 (977 aa).

2 PARP-type zinc fingers span residues 8 to 91 (WKAE…GSAP) and 104 to 179 (CTIE…KKDA). Zn(2+) is bound by residues Cys-20, Cys-23, His-52, Cys-55, Cys-116, Cys-119, His-141, and Cys-144. Disordered regions lie at residues 177 to 199 (KDAP…QNDI) and 218 to 237 (DKGK…DLQE). Positions 227-365 (DSNANSSDLQ…AKKPERVLPP (139 aa)) constitute a PADR1 zinc-binding domain. The region spanning 254–288 (KKHVSTAELRNMLEANGQDTSGPERHLLDRCADGM) is the SAP domain. Residues 291–335 (GALGTCPVCSSFLYYHGGQYHCSGYVSEWSKCTYSTTEPVRSKKK) are zinc ribbon. Zn(2+) is bound by residues Cys-296, Cys-299, Cys-312, and Cys-322. Residues 381 to 473 (SFLSEGLDKL…RVLPFDLYKV (93 aa)) form the BRCT domain. Positions 504–604 (TGHILEDGKS…TNFQKQPGKF (101 aa)) constitute a WGR domain. Residues 626 to 745 (KSSLPPQLLE…DIEIASKLVG (120 aa)) form the PARP alpha-helical domain. Residues 752 to 977 (ESLDDKYKKL…LLKVRFHHKR (226 aa)) enclose the PARP catalytic domain.

This sequence belongs to the ARTD/PARP family.

Its subcellular location is the nucleus. The enzyme catalyses NAD(+) + (ADP-D-ribosyl)n-acceptor = nicotinamide + (ADP-D-ribosyl)n+1-acceptor + H(+).. It carries out the reaction L-aspartyl-[protein] + NAD(+) = 4-O-(ADP-D-ribosyl)-L-aspartyl-[protein] + nicotinamide. The catalysed reaction is L-glutamyl-[protein] + NAD(+) = 5-O-(ADP-D-ribosyl)-L-glutamyl-[protein] + nicotinamide. Involved in the base excision repair (BER) pathway, by catalyzing the poly(ADP-ribosyl)ation of a limited number of acceptor proteins involved in chromatin architecture and in DNA metabolism. This modification follows DNA damages and appears as an obligatory step in a detection/signaling pathway leading to the reparation of DNA strand breaks. In Oryza sativa subsp. japonica (Rice), this protein is Poly [ADP-ribose] polymerase 1 (PARP1).